The primary structure comprises 310 residues: Homoserine kinase (310 aa).

91–101 (PIGSGLGSSAC) contacts ATP.

This sequence belongs to the GHMP kinase family. Homoserine kinase subfamily.

The protein resides in the cytoplasm. The enzyme catalyses L-homoserine + ATP = O-phospho-L-homoserine + ADP + H(+). Its pathway is amino-acid biosynthesis; L-threonine biosynthesis; L-threonine from L-aspartate: step 4/5. Its function is as follows. Catalyzes the ATP-dependent phosphorylation of L-homoserine to L-homoserine phosphate. The chain is Homoserine kinase from Escherichia coli O157:H7.